The sequence spans 597 residues: Gigaxonin (597 aa).

In terms of domain architecture, BTB spans 30 to 99 (CDAHLVLDGE…IFSGQIRLNE (70 aa)). Residues 134–236 (CIGIRDFALH…DSSYLREQML (103 aa)) enclose the BACK domain. Kelch repeat units lie at residues 274-326 (CIVT…SAEG), 327-374 (FLFV…EIDG), 376-421 (LYIL…AMKK), 422-468 (KIYA…GVAM), 470-522 (LYVF…VYGA), and 528-574 (SIYV…AALR).

As to quaternary structure, interacts with TBCB. Interacts with CUL3. Part of a complex that contains CUL3, RBX1 and GAN. Interacts (via BTB domain) with UBA1. Interacts (via Kelch domains) with MAP1B (via C-terminus) and MAP1S (via C-terminus). In terms of processing, ubiquitinated by E3 ubiquitin ligase complex formed by CUL3 and RBX1 and probably targeted for proteasome-independent degradation. As to expression, expressed in brain, heart and muscle.

Its subcellular location is the cytoplasm. It localises to the cytoskeleton. The protein operates within protein modification; protein ubiquitination. Functionally, probable cytoskeletal component that directly or indirectly plays an important role in neurofilament architecture. May act as a substrate-specific adapter of an E3 ubiquitin-protein ligase complex which mediates the ubiquitination and subsequent proteasomal degradation of target proteins. Controls degradation of TBCB. Controls degradation of MAP1B and MAP1S, and is critical for neuronal maintenance and survival. This Homo sapiens (Human) protein is Gigaxonin (GAN).